A 262-amino-acid polypeptide reads, in one-letter code: Glutamine-binding protein (262 aa).

A signal peptide spans 1–26; the sequence is MKRKTVWKIWITLALIALLSITALAG. A lipid anchor (N-palmitoyl cysteine) is attached at C27. The S-diacylglycerol cysteine moiety is linked to residue C27.

This sequence belongs to the bacterial solute-binding protein 3 family.

It localises to the cell membrane. Functionally, involved in glutamine-transport system. Interacts with the glutamine-transport system GlnPQ. This chain is Glutamine-binding protein (glnH), found in Geobacillus stearothermophilus (Bacillus stearothermophilus).